We begin with the raw amino-acid sequence, 263 residues long: Tryptophan synthase alpha chain (263 aa).

Active-site proton acceptor residues include Glu-50 and Asp-61.

Belongs to the TrpA family. In terms of assembly, tetramer of two alpha and two beta chains.

It carries out the reaction (1S,2R)-1-C-(indol-3-yl)glycerol 3-phosphate + L-serine = D-glyceraldehyde 3-phosphate + L-tryptophan + H2O. It functions in the pathway amino-acid biosynthesis; L-tryptophan biosynthesis; L-tryptophan from chorismate: step 5/5. Its function is as follows. The alpha subunit is responsible for the aldol cleavage of indoleglycerol phosphate to indole and glyceraldehyde 3-phosphate. This chain is Tryptophan synthase alpha chain, found in Clostridium acetobutylicum (strain ATCC 824 / DSM 792 / JCM 1419 / IAM 19013 / LMG 5710 / NBRC 13948 / NRRL B-527 / VKM B-1787 / 2291 / W).